The sequence spans 426 residues: Serine--tRNA ligase (426 aa).

233–235 (TAE) is an L-serine binding site. 264-266 (RSE) provides a ligand contact to ATP. E287 contacts L-serine. 351–354 (EISS) serves as a coordination point for ATP. L-serine is bound at residue S387.

It belongs to the class-II aminoacyl-tRNA synthetase family. Type-1 seryl-tRNA synthetase subfamily. As to quaternary structure, homodimer. The tRNA molecule binds across the dimer.

The protein localises to the cytoplasm. The enzyme catalyses tRNA(Ser) + L-serine + ATP = L-seryl-tRNA(Ser) + AMP + diphosphate + H(+). The catalysed reaction is tRNA(Sec) + L-serine + ATP = L-seryl-tRNA(Sec) + AMP + diphosphate + H(+). Its pathway is aminoacyl-tRNA biosynthesis; selenocysteinyl-tRNA(Sec) biosynthesis; L-seryl-tRNA(Sec) from L-serine and tRNA(Sec): step 1/1. Its function is as follows. Catalyzes the attachment of serine to tRNA(Ser). Is also able to aminoacylate tRNA(Sec) with serine, to form the misacylated tRNA L-seryl-tRNA(Sec), which will be further converted into selenocysteinyl-tRNA(Sec). The sequence is that of Serine--tRNA ligase from Pseudomonas putida (strain GB-1).